Consider the following 407-residue polypeptide: Tyrosine--tRNA ligase (407 aa).

Residue Tyr35 participates in L-tyrosine binding. Positions 40-49 match the 'HIGH' region motif; sequence PTADSLHVGH. 2 residues coordinate L-tyrosine: Tyr168 and Gln172. The 'KMSKS' region signature appears at 228-232; that stretch reads KMGKT. Residue Lys231 participates in ATP binding. Positions 341 to 405 constitute an S4 RNA-binding domain; that stretch reads NPLVDLLAKC…RGKKNFNRIV (65 aa).

Belongs to the class-I aminoacyl-tRNA synthetase family. TyrS type 1 subfamily. In terms of assembly, homodimer.

The protein localises to the cytoplasm. It carries out the reaction tRNA(Tyr) + L-tyrosine + ATP = L-tyrosyl-tRNA(Tyr) + AMP + diphosphate + H(+). Functionally, catalyzes the attachment of tyrosine to tRNA(Tyr) in a two-step reaction: tyrosine is first activated by ATP to form Tyr-AMP and then transferred to the acceptor end of tRNA(Tyr). The protein is Tyrosine--tRNA ligase of Clostridium botulinum (strain 657 / Type Ba4).